The chain runs to 512 residues: Activin receptor type-2B (512 aa).

A signal peptide spans 1 to 24 (MSASWLTLAVLCATLGAGPGHGEA). Over 25-137 (ETRECIYYNA…PPPPTPSLLN (113 aa)) the chain is Extracellular. 5 cysteine pairs are disulfide-bonded: Cys-29–Cys-59, Cys-49–Cys-77, Cys-84–Cys-103, Cys-90–Cys-102, and Cys-104–Cys-109. Asn-42 and Asn-65 each carry an N-linked (GlcNAc...) asparagine glycan. A helical membrane pass occupies residues 138-158 (ILVYSLLPIAVLSVAILLAFW). Topologically, residues 159–512 (MYRHRKPPYG…VDLPPKESSI (354 aa)) are cytoplasmic. The region spanning 190–478 (LQLLEIKARG…LSAGCVEERI (289 aa)) is the Protein kinase domain. Residues 196 to 204 (KARGRFGCV) and Lys-217 contribute to the ATP site. The Proton acceptor role is filled by Asp-321.

It belongs to the protein kinase superfamily. TKL Ser/Thr protein kinase family. TGFB receptor subfamily. It depends on Mg(2+) as a cofactor. Mn(2+) is required as a cofactor. As to expression, not expressed in hen anterior pituitary during the ovulatory cycle but expressed in the ovarian follicle.

The protein resides in the membrane. It carries out the reaction L-threonyl-[receptor-protein] + ATP = O-phospho-L-threonyl-[receptor-protein] + ADP + H(+). The enzyme catalyses L-seryl-[receptor-protein] + ATP = O-phospho-L-seryl-[receptor-protein] + ADP + H(+). On ligand binding, forms a receptor complex consisting of two type II and two type I transmembrane serine/threonine kinases. Type II receptors phosphorylate and activate type I receptors which autophosphorylate, then bind and activate SMAD transcriptional regulators. Receptor for activin A, activin B and inhibin A. May modulate neuropeptide expression in dorsal root ganglia (DRG) neurons and ovarian follicle development. The polypeptide is Activin receptor type-2B (ACVR2B) (Gallus gallus (Chicken)).